A 1019-amino-acid polypeptide reads, in one-letter code: Macrophage colony-stimulating factor 1 receptor 2 (1019 aa).

The first 18 residues, 1–18, serve as a signal peptide directing secretion; it reads MKSYCLLLSITLSCCCSA. The Extracellular segment spans residues 19–576; it reads EDLPDPPSIH…LREHNSAFMS (558 aa). Ig-like C2-type domains lie at 37–109, 106–212, and 224–312; these read QAEA…IHLY, IHLY…LLVA, and QNKA…LIVL. An intrachain disulfide couples C52 to C92. 14 N-linked (GlcNAc...) asparagine glycosylation sites follow: N96, N148, N169, N249, N342, N346, N355, N369, N379, N408, N422, N429, N433, and N514. 2 disulfide bridges follow: C139–C193 and C239–C294. Ig-like C2-type domains are found at residues 383-474 and 487-567; these read STTV…LRIY and TLTC…VFHL. Residues C490 and C552 are joined by a disulfide bond. Residues 577–597 traverse the membrane as a helical segment; the sequence is ALIGAGSTAAILFLLLLVVFY. At 598 to 1019 the chain is on the cytoplasmic side; it reads KWRQKPKYEI…LSVTNIYQLS (422 aa). Residues 601 to 633 form a regulatory juxtamembrane domain region; it reads QKPKYEIRWKIIESTEGNHYTFVDPTLLPYNYK. Position 620 is a phosphotyrosine; by autocatalysis (Y620). One can recognise a Protein kinase domain in the interval 641–963; that stretch reads LRLGAVLGSG…MICQLIDRLL (323 aa). ATP contacts are provided by residues 647-655 and K674; that span reads LGSGAFGKV. 2 positions are modified to phosphotyrosine; by autocatalysis: Y756 and Y778. The Proton acceptor role is filled by D827. The tract at residues 845–867 is activation loop; sequence DFGLARDIQNDDSYIVQGNARLP. 2 positions are modified to phosphotyrosine; by autocatalysis: Y858 and Y974. The segment at 970–1001 is disordered; the sequence is NHQSYSNINETKKDDFKGGKSQRRGEEEEQRR. Positions 979-1001 are enriched in basic and acidic residues; it reads ETKKDDFKGGKSQRRGEEEEQRR. At Y1016 the chain carries Phosphotyrosine; by autocatalysis.

The protein belongs to the protein kinase superfamily. Tyr protein kinase family. CSF-1/PDGF receptor subfamily. Monomer. Homodimer. Interacts with CSF1. Autophosphorylated in response to CSF1 binding. autophosphorylation, leading to its degradation. Post-translationally, ubiquitinated. Becomes rapidly polyubiquitinated after autophosphorylation, leading to its degradation.

It is found in the cell membrane. It catalyses the reaction L-tyrosyl-[protein] + ATP = O-phospho-L-tyrosyl-[protein] + ADP + H(+). Its activity is regulated as follows. Present in an inactive conformation in the absence of bound ligand. CSF1 binding leads to dimerization and activation by autophosphorylation on tyrosine residues. Tyrosine-protein kinase that acts as a cell-surface receptor for CSF1 and plays an essential role in the regulation of survival, proliferation and differentiation of hematopoietic precursor cells, especially mononuclear phagocytes, such as macrophages and monocytes. Plays an important role in innate immunity and in inflammatory processes. Plays an important role in the regulation of osteoclast proliferation and differentiation, the regulation of bone resorption, and is required for normal bone development. Promotes reorganization of the actin cytoskeleton, regulates formation of membrane ruffles, cell adhesion and cell migration. Activates several signaling pathways in response to ligand binding. The protein is Macrophage colony-stimulating factor 1 receptor 2 (csf1r2) of Takifugu rubripes (Japanese pufferfish).